Here is a 372-residue protein sequence, read N- to C-terminus: tRNA-specific 2-thiouridylase MnmA (372 aa).

ATP-binding positions include 9-16 and M35; that span reads GLSGGVDS. An interaction with target base in tRNA region spans residues 95-97; that stretch reads NPD. Residue C100 is the Nucleophile of the active site. A disulfide bridge links C100 with C198. G124 contributes to the ATP binding site. An interaction with tRNA region spans residues 148–150; the sequence is KDQ. The Cysteine persulfide intermediate role is filled by C198. Residues 317-318 are interaction with tRNA; it reads RY.

It belongs to the MnmA/TRMU family.

Its subcellular location is the cytoplasm. It carries out the reaction S-sulfanyl-L-cysteinyl-[protein] + uridine(34) in tRNA + AH2 + ATP = 2-thiouridine(34) in tRNA + L-cysteinyl-[protein] + A + AMP + diphosphate + H(+). Functionally, catalyzes the 2-thiolation of uridine at the wobble position (U34) of tRNA, leading to the formation of s(2)U34. The protein is tRNA-specific 2-thiouridylase MnmA of Delftia acidovorans (strain DSM 14801 / SPH-1).